The sequence spans 232 residues: Pirin-like protein CC_1473 (232 aa).

This sequence belongs to the pirin family.

The protein is Pirin-like protein CC_1473 of Caulobacter vibrioides (strain ATCC 19089 / CIP 103742 / CB 15) (Caulobacter crescentus).